Consider the following 117-residue polypeptide: METKKLIGKPLQPARPVRHLTSPPGAVFPFNFQNEYPCNTQCIQSGVSRCKTNGMQAFSQGLNEQQQQQSPVKKERIKYSRDFLLKLSSVSICRKKPDFLPDHPIVLQKPENNQSFK.

The tract at residues 1–20 is disordered; that stretch reads METKKLIGKPLQPARPVRHL.

This is an uncharacterized protein from Homo sapiens (Human).